Here is a 349-residue protein sequence, read N- to C-terminus: Bifunctional nitrilase/nitrile hydratase NIT4A (349 aa).

The CN hydrolase domain occupies 29 to 301 (VRATVVQAST…EALISADLDL (273 aa)). The active-site Proton acceptor is Glu69. Lys156 is a catalytic residue. Catalysis depends on Cys190, which acts as the Nucleophile.

This sequence belongs to the carbon-nitrogen hydrolase superfamily. Nitrilase family. As to expression, ubiquitous.

The catalysed reaction is L-asparagine = 3-cyano-L-alanine + H2O. It carries out the reaction 3-cyano-L-alanine + 2 H2O = L-aspartate + NH4(+). Involved in the cyanide detoxification pathway. Has nitrilase and nitrile-hydratase activity in the ratio 4.0:1, producing both asparagine and aspartic acid from beta-cyano-L-alanine (Ala(CN)). Can also use 3-phenylpropionitrile as substrate, but not indole-3-acetonitrile. The polypeptide is Bifunctional nitrilase/nitrile hydratase NIT4A (NIT4A) (Lupinus angustifolius (Narrow-leaved blue lupine)).